A 120-amino-acid polypeptide reads, in one-letter code: MTHDVSKYALGRIAEDKACDYLSVNGYIVLDRNWYCRFGELDIIARKNGVIVAVEVKGGKRNADYPICNITVKKLSKLTFLLKAWLHENKLNEFCIDLRIDAISVTFIPELQIRHFVGIL.

This sequence belongs to the UPF0102 family.

In Tropheryma whipplei (strain Twist) (Whipple's bacillus), this protein is UPF0102 protein TWT_455.